The following is a 1545-amino-acid chain: Immunoglobulin A1 protease autotransporter (1545 aa).

The signal sequence occupies residues 1-25; it reads MLNKKFKLNFIALTVAYALTPYTEA. One can recognise a Peptidase S6 domain in the interval 26-336; the sequence is ALVRDDVDYQ…NIYKPEFAEK (311 aa). The active site involves Ser-292. Polar residues predominate over residues 995–1019; that stretch reads TVDTTNITTPNNIQADVPSVPSNNE. A disordered region spans residues 995 to 1246; sequence TVDTTNITTP…NVEPATTSSN (252 aa). Low complexity predominate over residues 1036–1046; it reads TPSETTETVAE. Residues 1048–1060 show a composition bias toward basic and acidic residues; sequence SKQESKTVEKNEQ. The span at 1080-1094 shows a compositional bias: polar residues; sequence VKANTQTNEVAQSGS. Residues 1095 to 1125 show a composition bias toward basic and acidic residues; sequence ETKETQTTETKETATVEKEEKAKVETEKTQE. 2 stretches are compositionally biased toward polar residues: residues 1129–1145 and 1161–1222; these read VTSQVSPKQEQSETVQP and EPQS…SSNK. Residues 1293–1545 form the Autotransporter domain; the sequence is NNEGQYNVWV…TAELKLSFSF (253 aa).

The protein resides in the periplasm. It localises to the secreted. Its subcellular location is the cell surface. It is found in the cell outer membrane. It catalyses the reaction Cleavage of immunoglobulin A molecules at certain Pro-|-Xaa bonds in the hinge region. No small molecule substrates are known.. Virulence factor; cleaves host immunoglobulin A producing intact Fc and Fab fragments. This Haemophilus influenzae protein is Immunoglobulin A1 protease autotransporter (iga).